A 216-amino-acid polypeptide reads, in one-letter code: ATP phosphoribosyltransferase (216 aa).

This sequence belongs to the ATP phosphoribosyltransferase family. Short subfamily. As to quaternary structure, heteromultimer composed of HisG and HisZ subunits.

The protein resides in the cytoplasm. It catalyses the reaction 1-(5-phospho-beta-D-ribosyl)-ATP + diphosphate = 5-phospho-alpha-D-ribose 1-diphosphate + ATP. Its pathway is amino-acid biosynthesis; L-histidine biosynthesis; L-histidine from 5-phospho-alpha-D-ribose 1-diphosphate: step 1/9. Its function is as follows. Catalyzes the condensation of ATP and 5-phosphoribose 1-diphosphate to form N'-(5'-phosphoribosyl)-ATP (PR-ATP). Has a crucial role in the pathway because the rate of histidine biosynthesis seems to be controlled primarily by regulation of HisG enzymatic activity. The chain is ATP phosphoribosyltransferase from Streptococcus thermophilus (strain ATCC BAA-491 / LMD-9).